The primary structure comprises 224 residues: Zinc finger C4H2 domain-containing protein (224 aa).

Residues glutamate 12 to leucine 97 are a coiled coil. Disordered stretches follow at residues glutamine 166–proline 185 and proline 204–glutamate 224. The C4H2-type zinc finger occupies cysteine 189 to cysteine 206. Over residues alanine 208–glutamate 224 the composition is skewed to basic residues.

It localises to the nucleus. The protein localises to the cytoplasm. It is found in the postsynaptic cell membrane. In terms of biological role, plays a role in GABAergic and V2 interneurons differentiation. Involved in motoneuron development and in neuromuscular junction formation. The polypeptide is Zinc finger C4H2 domain-containing protein (zc4h2) (Danio rerio (Zebrafish)).